Here is a 24-residue protein sequence, read N- to C-terminus: 29 kDa outer membrane protein (24 aa).

It localises to the cell outer membrane. In terms of biological role, may be involved in transporting molecules across the outer membrane. This is 29 kDa outer membrane protein from Acinetobacter baumannii.